We begin with the raw amino-acid sequence, 133 residues long: MSRHKSKSIPGRNLRLADQIQKDLAGIIQREIDMTRAGLITLSGVELSADYAHAKVYFTVLGAEPDTAAALLNEKAGWLHSQLYKLLHIHTVPTLRFVHDPQITRGIEMSVLIDRANRPGPHSGVPDEPEDQS.

This sequence belongs to the RbfA family. Monomer. Binds 30S ribosomal subunits, but not 50S ribosomal subunits or 70S ribosomes.

It localises to the cytoplasm. Its function is as follows. One of several proteins that assist in the late maturation steps of the functional core of the 30S ribosomal subunit. Associates with free 30S ribosomal subunits (but not with 30S subunits that are part of 70S ribosomes or polysomes). Required for efficient processing of 16S rRNA. May interact with the 5'-terminal helix region of 16S rRNA. The sequence is that of Ribosome-binding factor A from Bordetella pertussis (strain Tohama I / ATCC BAA-589 / NCTC 13251).